Reading from the N-terminus, the 212-residue chain is uncharacterized protein (212 aa).

Helical transmembrane passes span 34-54 (IFGIVLVILSLPSALPIPAPG), 59-79 (FGVLIFLVAIQLMAGRQELWL), 126-146 (ILMGITVGSMAISMMIPIPGT), and 171-191 (AGMIFSVLIGVLMVSVIYVFF).

This sequence to R.meliloti ExoD.

It localises to the cell membrane. This is an uncharacterized protein from Synechocystis sp. (strain ATCC 27184 / PCC 6803 / Kazusa).